A 179-amino-acid polypeptide reads, in one-letter code: Adenine phosphoribosyltransferase (179 aa).

This sequence belongs to the purine/pyrimidine phosphoribosyltransferase family. In terms of assembly, homodimer.

The protein resides in the cytoplasm. It catalyses the reaction AMP + diphosphate = 5-phospho-alpha-D-ribose 1-diphosphate + adenine. It participates in purine metabolism; AMP biosynthesis via salvage pathway; AMP from adenine: step 1/1. Its function is as follows. Catalyzes a salvage reaction resulting in the formation of AMP, that is energically less costly than de novo synthesis. This chain is Adenine phosphoribosyltransferase, found in Bradyrhizobium sp. (strain ORS 278).